A 429-amino-acid chain; its full sequence is Bifunctional protein GlmU (429 aa).

Residues 1–223 (MKTSILILAA…EDEFMGINDK (223 aa)) are pyrophosphorylase. UDP-N-acetyl-alpha-D-glucosamine-binding positions include 8–11 (LAAG), lysine 22, and 81–82 (GT). Aspartate 102 provides a ligand contact to Mg(2+). Glycine 135, glutamate 149, asparagine 164, and asparagine 221 together coordinate UDP-N-acetyl-alpha-D-glucosamine. A Mg(2+)-binding site is contributed by asparagine 221. The linker stretch occupies residues 224 to 244 (FELSIAENFMQEKIKKYWMQQ). An N-acetyltransferase region spans residues 245–429 (GVIFHLPQST…KDYYYKKFQK (185 aa)). Residues arginine 308 and lysine 325 each contribute to the UDP-N-acetyl-alpha-D-glucosamine site. Histidine 336 (proton acceptor) is an active-site residue. Residues tyrosine 339 and asparagine 350 each coordinate UDP-N-acetyl-alpha-D-glucosamine. Residues 359–360 (NY), serine 378, alanine 396, and arginine 413 contribute to the acetyl-CoA site.

It in the N-terminal section; belongs to the N-acetylglucosamine-1-phosphate uridyltransferase family. In the C-terminal section; belongs to the transferase hexapeptide repeat family. In terms of assembly, homotrimer. Mg(2+) is required as a cofactor.

It is found in the cytoplasm. It carries out the reaction alpha-D-glucosamine 1-phosphate + acetyl-CoA = N-acetyl-alpha-D-glucosamine 1-phosphate + CoA + H(+). The catalysed reaction is N-acetyl-alpha-D-glucosamine 1-phosphate + UTP + H(+) = UDP-N-acetyl-alpha-D-glucosamine + diphosphate. It functions in the pathway nucleotide-sugar biosynthesis; UDP-N-acetyl-alpha-D-glucosamine biosynthesis; N-acetyl-alpha-D-glucosamine 1-phosphate from alpha-D-glucosamine 6-phosphate (route II): step 2/2. Its pathway is nucleotide-sugar biosynthesis; UDP-N-acetyl-alpha-D-glucosamine biosynthesis; UDP-N-acetyl-alpha-D-glucosamine from N-acetyl-alpha-D-glucosamine 1-phosphate: step 1/1. It participates in bacterial outer membrane biogenesis; LPS lipid A biosynthesis. Its function is as follows. Catalyzes the last two sequential reactions in the de novo biosynthetic pathway for UDP-N-acetylglucosamine (UDP-GlcNAc). The C-terminal domain catalyzes the transfer of acetyl group from acetyl coenzyme A to glucosamine-1-phosphate (GlcN-1-P) to produce N-acetylglucosamine-1-phosphate (GlcNAc-1-P), which is converted into UDP-GlcNAc by the transfer of uridine 5-monophosphate (from uridine 5-triphosphate), a reaction catalyzed by the N-terminal domain. The polypeptide is Bifunctional protein GlmU (Campylobacter jejuni (strain RM1221)).